The sequence spans 438 residues: MTTSPGVPEPSAQLLRLAAEVRQAAMALGQSDDNQRRKALIAMANALLSSSEQIVRANRLDLEKARTEGLAAALMARLKLDESKLNSAIEGLRQLAQLSDPLGLRQLHRELDQDLVLERITVPLGVLGVIFEARPDAVIQIASLAIRSGNGALLKGGSEASHTNQAIIEALKNGLAETEIDPEAIALLTTRQESLALLRLDGLVDLIIPRGSNELVRFIQDNTRIPVLGHADGICHLYLDAAADLKQALQIAIDSKTQYPAACNAIETLLIHQSIAPSFLELAIPAFRQARVRLLGDSASRALGVEESASEEDWATEYLDLILSVKVVPDLEGALDHIRRYSSRHTEAIVSNDQETAERFLQVVDSAGVFHNCSTRFADGFRYGFGAEVGISTQTLPPRGPVGLEGLVTYRYRLRGQGQIVADYANGECMFTHRDLPL.

This sequence belongs to the gamma-glutamyl phosphate reductase family.

The protein resides in the cytoplasm. It catalyses the reaction L-glutamate 5-semialdehyde + phosphate + NADP(+) = L-glutamyl 5-phosphate + NADPH + H(+). The protein operates within amino-acid biosynthesis; L-proline biosynthesis; L-glutamate 5-semialdehyde from L-glutamate: step 2/2. Catalyzes the NADPH-dependent reduction of L-glutamate 5-phosphate into L-glutamate 5-semialdehyde and phosphate. The product spontaneously undergoes cyclization to form 1-pyrroline-5-carboxylate. The sequence is that of Gamma-glutamyl phosphate reductase from Prochlorococcus marinus (strain MIT 9303).